Consider the following 606-residue polypeptide: V-type proton ATPase catalytic subunit A (606 aa).

At alanine 2 the chain carries N-acetylalanine. 240 to 247 lines the ATP pocket; it reads AFGCGKTV.

Belongs to the ATPase alpha/beta chains family. As to quaternary structure, V-ATPase is a heteromultimeric enzyme made up of two complexes: the ATP-hydrolytic V1 complex and the proton translocation V0 complex. The V1 complex consists of three catalytic AB heterodimers that form a heterohexamer, three peripheral stalks each consisting of EG heterodimers, one central rotor including subunits D and F, and the regulatory subunits C and H. The proton translocation complex V0 consists of the proton transport subunit a, a ring of proteolipid subunits c9c'', rotary subunit d, subunits e and f, and the accessory subunits vah-19/Ac45 and vah-20/PRR. As to expression, expressed in proximal but not distal germ cells.

The catalysed reaction is ATP + H2O + 4 H(+)(in) = ADP + phosphate + 5 H(+)(out). Its activity is regulated as follows. ATP hydrolysis occurs at the interface between the nucleotide-binding domains of subunits A and B. ATP hydrolysis triggers a conformational change in the subunits D and F, which induces a shift of subunit d. The c-ring is subsequently rotated and results in a continuous proton translocation across the membrane. Its function is as follows. Catalytic subunit of the V1 complex of vacuolar(H+)-ATPase (V-ATPase), a multisubunit enzyme composed of a peripheral complex (V1) that hydrolyzes ATP and a membrane integral complex (V0) that translocates protons. V-ATPase is responsible for acidifying and maintaining the pH of intracellular compartments and in some cell types, is targeted to the plasma membrane, where it is responsible for acidifying the extracellular environment. Required along with other vacuolar ATPase components for the removal of protein aggregates which form in immature oocytes in the distal gonad. This removal occurs as the oocytes mature and move to the proximal gonad, is triggered by the introduction of sperm through mating and occurs before fertilization. The introduction of sperm triggers V-ATPase accumulation in proximal oocytes and induces lysosomal acidification which leads to engulfing of protein aggregates by lysosomes and subsequent clearance of the aggregates. Lysosomal acidification also leads to changes in mitochondrial morphology and function. Mitochondria in distal immature oocytes are fragmented, produce high levels of reactive oxygen species (ROS) and have high membrane potential, indicative of metabolic inactivity. In contrast, mitochondria in proximal mature oocytes are tubular with lower ROS levels and membrane potential, indicative of an active metabolic state required for aggregate mobilization before clearance. Involved in receptor-mediated endocytosis. In Caenorhabditis elegans, this protein is V-type proton ATPase catalytic subunit A.